The sequence spans 204 residues: Somatotropin (204 aa).

An N-terminal signal peptide occupies residues 1–17 (MNSVVLLLSVVCLGVSS). A Pyrrolidone carboxylic acid modification is found at glutamine 18. Histidine 36 provides a ligand contact to Zn(2+). Cysteine 69 and cysteine 177 form a disulfide bridge. A Zn(2+)-binding site is contributed by glutamate 186. An intrachain disulfide couples cysteine 194 to cysteine 202.

This sequence belongs to the somatotropin/prolactin family.

It is found in the secreted. Growth hormone plays an important role in growth control and involved in the regulation of several anabolic processes. The chain is Somatotropin (gh) from Oreochromis niloticus (Nile tilapia).